A 154-amino-acid polypeptide reads, in one-letter code: Regulatory protein RecX (154 aa).

Belongs to the RecX family.

Its subcellular location is the cytoplasm. Its function is as follows. Modulates RecA activity. The chain is Regulatory protein RecX from Trichlorobacter lovleyi (strain ATCC BAA-1151 / DSM 17278 / SZ) (Geobacter lovleyi).